The primary structure comprises 386 residues: Protein MGF 360-4L (386 aa).

It belongs to the asfivirus MGF 360 family.

Plays a role in virus cell tropism, and may be required for efficient virus replication in macrophages. The polypeptide is Protein MGF 360-4L (Ornithodoros (relapsing fever ticks)).